Consider the following 1100-residue polypeptide: DNA-directed RNA polymerase subunit beta (1100 aa).

The segment at 1064 to 1100 is disordered; it reads YEEDKEVDLMADVNQRRTPSRPTYESMSVGDIDDDDD. Residues 1079-1089 are compositionally biased toward polar residues; it reads RRTPSRPTYES.

The protein belongs to the RNA polymerase beta chain family. In cyanobacteria the RNAP catalytic core is composed of 2 alpha, 1 beta, 1 beta', 1 gamma and 1 omega subunit. When a sigma factor is associated with the core the holoenzyme is formed, which can initiate transcription.

The catalysed reaction is RNA(n) + a ribonucleoside 5'-triphosphate = RNA(n+1) + diphosphate. Its function is as follows. DNA-dependent RNA polymerase catalyzes the transcription of DNA into RNA using the four ribonucleoside triphosphates as substrates. The protein is DNA-directed RNA polymerase subunit beta of Synechococcus sp. (strain ATCC 27144 / PCC 6301 / SAUG 1402/1) (Anacystis nidulans).